The chain runs to 575 residues: uncharacterized protein (575 aa).

The segment at 507 to 536 is disordered; sequence AHRKVGELNNKKPMTGEKPPPKNKKSPKYK.

This is an uncharacterized protein from Ostreid herpesvirus 1 (isolate France) (OsHV-1).